Consider the following 209-residue polypeptide: ATP-dependent Clp protease proteolytic subunit (209 aa).

S106 acts as the Nucleophile in catalysis. Residue H131 is part of the active site.

Belongs to the peptidase S14 family. As to quaternary structure, fourteen ClpP subunits assemble into 2 heptameric rings which stack back to back to give a disk-like structure with a central cavity, resembling the structure of eukaryotic proteasomes.

The protein resides in the cytoplasm. It catalyses the reaction Hydrolysis of proteins to small peptides in the presence of ATP and magnesium. alpha-casein is the usual test substrate. In the absence of ATP, only oligopeptides shorter than five residues are hydrolyzed (such as succinyl-Leu-Tyr-|-NHMec, and Leu-Tyr-Leu-|-Tyr-Trp, in which cleavage of the -Tyr-|-Leu- and -Tyr-|-Trp bonds also occurs).. In terms of biological role, cleaves peptides in various proteins in a process that requires ATP hydrolysis. Has a chymotrypsin-like activity. Plays a major role in the degradation of misfolded proteins. The sequence is that of ATP-dependent Clp protease proteolytic subunit from Brucella melitensis biotype 2 (strain ATCC 23457).